A 692-amino-acid chain; its full sequence is ATP-dependent RNA helicase MSS116, mitochondrial (692 aa).

The N-terminal 37 residues, 1–37 (MMIARFGKQVLRKNVLVSNRIHFPVISRGFHNSFINK), are a transit peptide targeting the mitochondrion. Residues 82–113 (SQVTEQTELTKSEEEEKKKKNINTNTNKNDRK) form a disordered region. Positions 89–99 (ELTKSEEEEKK) are enriched in basic and acidic residues. Residues 130 to 158 (DFKNTGLIDDVILRALDRAHFKDLTPIQQ) carry the Q motif motif. Positions 162–349 (VPLLETERGM…KQHINKKYDY (188 aa)) constitute a Helicase ATP-binding domain. 175 to 182 (AKTGTGKT) lines the ATP pocket. The DEAD box signature appears at 290 to 293 (DEAD). Residues 384–534 (YVNQLVKDSP…QVHESSEIDN (151 aa)) enclose the Helicase C-terminal domain. Positions 643 to 692 (NRYSGGGGNRSEKRFSFAGRGGNSGGHSGRGRGGRSGYSGGRSSQYSDWE) are disordered. The span at 661–670 (GRGGNSGGHS) shows a compositional bias: gly residues.

It belongs to the DEAD box helicase family. DDX18/HAS1 subfamily.

Its subcellular location is the mitochondrion matrix. The catalysed reaction is ATP + H2O = ADP + phosphate + H(+). Functionally, ATP-dependent RNA helicase required for mitochondrial splicing of group I and II introns. Also required for efficient mitochondrial translation. The polypeptide is ATP-dependent RNA helicase MSS116, mitochondrial (MSS116) (Lodderomyces elongisporus (strain ATCC 11503 / CBS 2605 / JCM 1781 / NBRC 1676 / NRRL YB-4239) (Yeast)).